The sequence spans 1017 residues: Semaphorin-6D (1017 aa).

The signal sequence occupies residues 1–20; that stretch reads MRVFLLCAYILLLMISQLRA. The Extracellular segment spans residues 21–606; it reads VSFPEDDEPL…GESNQMVHMN (586 aa). The 486-residue stretch at 27–512 folds into the Sema domain; the sequence is DEPLNTVDYH…FSSCVIRIPL (486 aa). Residue Asn-51 is glycosylated (N-linked (GlcNAc...) asparagine). Disulfide bonds link Cys-108/Cys-118, Cys-136/Cys-145, Cys-259/Cys-370, and Cys-284/Cys-329. Asn-283 carries an N-linked (GlcNAc...) asparagine glycan. 2 N-linked (GlcNAc...) asparagine glycosylation sites follow: Asn-435 and Asn-461. Cystine bridges form between Cys-477/Cys-506, Cys-515/Cys-533, Cys-521/Cys-568, and Cys-525/Cys-541. One can recognise a PSI domain in the interval 514–569; that stretch reads RCERYGSCKKSCIASRDPYCGWLSQGSCGRVTPGMLAEGYEQDAEFGNTAHLGDCH. Residues 607 to 627 form a helical membrane-spanning segment; it reads VLITCVFAAFVLGAFIAGVAV. The Cytoplasmic portion of the chain corresponds to 628 to 1017; sequence YCYRDMFVRK…SVRPLNKYTY (390 aa). Phosphoserine occurs at positions 667, 678, and 688. Disordered regions lie at residues 688-719, 731-769, 783-818, and 873-912; these read SRKE…PTPE, AMKS…GHIP, TSFS…RSVD, and LYSP…HKNS. Thr-717 is subject to Phosphothreonine. The segment covering 734-749 has biased composition (basic and acidic residues); the sequence is SHSEKAHGHGASRKET. Residues Ser-875, Ser-901, and Ser-927 each carry the phosphoserine modification. The span at 875-886 shows a compositional bias: polar residues; it reads SPPSTLPRNSPT. Polar residues predominate over residues 965-981; sequence LQPSLSRQSSYTSNGTL. Residues 965–1017 are disordered; sequence LQPSLSRQSSYTSNGTLPRTGLKRTPSLKPDVPPKPSFVPQTPSVRPLNKYTY.

The protein belongs to the semaphorin family.

The protein localises to the cell membrane. Its function is as follows. Shows growth cone collapsing activity on dorsal root ganglion (DRG) neurons in vitro. May be a stop signal for the DRG neurons in their target areas, and possibly also for other neurons. May also be involved in the maintenance and remodeling of neuronal connections. Ligand of TREM2 with PLXNA1 as coreceptor in dendritic cells, plays a role in the generation of immune responses and skeletal homeostasis. The polypeptide is Semaphorin-6D (SEMA6D) (Pongo abelii (Sumatran orangutan)).